The primary structure comprises 207 residues: MANVKLFDQTGKEVSSVELNDAIFGIEPNESVVFDVVISQRASLRQGTHAVKNRSAVSGGGRKPWRQKGTGRARQGSIRSPQWRGGGVVFGPTPRSYGYKLPQKVRRLALKSVYSAKVAEDKFVAVEGLSFAAPKTAEFAKVLSALSIDSKVLVIVEEGNEFAALSARNLPNVKVATATTASVLDIVNSDKLLVTKEAISTIEEVLA.

Positions 49–78 (HAVKNRSAVSGGGRKPWRQKGTGRARQGSI) are disordered.

It belongs to the universal ribosomal protein uL4 family. In terms of assembly, part of the 50S ribosomal subunit.

Its function is as follows. One of the primary rRNA binding proteins, this protein initially binds near the 5'-end of the 23S rRNA. It is important during the early stages of 50S assembly. It makes multiple contacts with different domains of the 23S rRNA in the assembled 50S subunit and ribosome. In terms of biological role, forms part of the polypeptide exit tunnel. This chain is Large ribosomal subunit protein uL4, found in Streptococcus uberis (strain ATCC BAA-854 / 0140J).